The primary structure comprises 284 residues: Acetyl-coenzyme A carboxylase carboxyl transferase subunit beta (284 aa).

One can recognise a CoA carboxyltransferase N-terminal domain in the interval 25-284; sequence LWVKCPETGA…LCKILTKSVQ (260 aa).

The protein belongs to the AccD/PCCB family. In terms of assembly, acetyl-CoA carboxylase is a heterohexamer composed of biotin carboxyl carrier protein (AccB), biotin carboxylase (AccC) and two subunits each of ACCase subunit alpha (AccA) and ACCase subunit beta (AccD).

It localises to the cytoplasm. It carries out the reaction N(6)-carboxybiotinyl-L-lysyl-[protein] + acetyl-CoA = N(6)-biotinyl-L-lysyl-[protein] + malonyl-CoA. It functions in the pathway lipid metabolism; malonyl-CoA biosynthesis; malonyl-CoA from acetyl-CoA: step 1/1. In terms of biological role, component of the acetyl coenzyme A carboxylase (ACC) complex. Biotin carboxylase (BC) catalyzes the carboxylation of biotin on its carrier protein (BCCP) and then the CO(2) group is transferred by the transcarboxylase to acetyl-CoA to form malonyl-CoA. The chain is Acetyl-coenzyme A carboxylase carboxyl transferase subunit beta from Liberibacter asiaticus (strain psy62).